The sequence spans 216 residues: Uridine kinase (216 aa).

16–23 (GASASGKS) serves as a coordination point for ATP.

Belongs to the uridine kinase family.

It is found in the cytoplasm. It catalyses the reaction uridine + ATP = UMP + ADP + H(+). It carries out the reaction cytidine + ATP = CMP + ADP + H(+). Its pathway is pyrimidine metabolism; CTP biosynthesis via salvage pathway; CTP from cytidine: step 1/3. The protein operates within pyrimidine metabolism; UMP biosynthesis via salvage pathway; UMP from uridine: step 1/1. The sequence is that of Uridine kinase from Pasteurella multocida (strain Pm70).